We begin with the raw amino-acid sequence, 408 residues long: G patch domain-containing protein 4 (408 aa).

An N-acetylmethionine modification is found at M1. At T4 the chain carries Phosphothreonine. The region spanning 11–57 is the G-patch domain; that stretch reads GMKFAEEQLLKHGWTQGKGLGRKENGITQALRVTLKQDTYGVGHDPA. K46 is covalently cross-linked (Glycyl lysine isopeptide (Lys-Gly) (interchain with G-Cter in SUMO2)). Position 116 is a phosphothreonine (T116). Disordered regions lie at residues 116 to 141 and 187 to 408; these read TSSG…KPPN and GQDP…KKRD. 2 positions are modified to phosphoserine: S128 and S130. Basic and acidic residues-rich tracts occupy residues 222–236, 245–257, and 274–283; these read RSAE…ESIR, HQEE…REGT, and LKNREHVDRS. Positions 340–354 are enriched in acidic residues; sequence EEDLNTEDEEVEEAL. The span at 358–372 shows a compositional bias: basic and acidic residues; the sequence is GTREAESRSCSDQKR. Basic residues predominate over residues 398–408; sequence KAKKKKQKKRD.

This Bos taurus (Bovine) protein is G patch domain-containing protein 4 (GPATCH4).